The chain runs to 390 residues: Phosphoglycerate kinase (390 aa).

Substrate-binding positions include 21 to 23 (DLN), R36, 59 to 62 (HLGR), R114, and R147. Residues K198, E314, and 340 to 343 (GGDT) each bind ATP.

Belongs to the phosphoglycerate kinase family. As to quaternary structure, monomer.

Its subcellular location is the cytoplasm. It carries out the reaction (2R)-3-phosphoglycerate + ATP = (2R)-3-phospho-glyceroyl phosphate + ADP. It functions in the pathway carbohydrate degradation; glycolysis; pyruvate from D-glyceraldehyde 3-phosphate: step 2/5. The protein is Phosphoglycerate kinase of Buchnera aphidicola subsp. Acyrthosiphon pisum (strain 5A).